A 306-amino-acid chain; its full sequence is D-alanine--D-alanine ligase (306 aa).

Residues glutamate 15 and serine 150 contribute to the active site. In terms of domain architecture, ATP-grasp spans 101–303 (KLLWKSLSLR…FDELILKILK (203 aa)). 134–189 (ILKLKFPVVIKPNNAGSSIGITIVNHPDLLIDSINLAFNYSNNIIIEKFLKGTEYT) is an ATP binding site. Residues aspartate 257, glutamate 270, and asparagine 272 each coordinate Mg(2+). Serine 281 is a catalytic residue.

This sequence belongs to the D-alanine--D-alanine ligase family. It depends on Mg(2+) as a cofactor. Mn(2+) is required as a cofactor.

The protein resides in the cytoplasm. The catalysed reaction is 2 D-alanine + ATP = D-alanyl-D-alanine + ADP + phosphate + H(+). The protein operates within cell wall biogenesis; peptidoglycan biosynthesis. Its function is as follows. Cell wall formation. This is D-alanine--D-alanine ligase from Buchnera aphidicola subsp. Schizaphis graminum (strain Sg).